Here is a 343-residue protein sequence, read N- to C-terminus: DNA repair and recombination protein RadA (343 aa).

An ATP-binding site is contributed by 107-114 (GEFGAGKS).

It belongs to the eukaryotic RecA-like protein family.

Involved in DNA repair and in homologous recombination. Binds and assemble on single-stranded DNA to form a nucleoprotein filament. Hydrolyzes ATP in a ssDNA-dependent manner and promotes DNA strand exchange between homologous DNA molecules. This Haloquadratum walsbyi (strain DSM 16790 / HBSQ001) protein is DNA repair and recombination protein RadA.